A 102-amino-acid polypeptide reads, in one-letter code: Small ribosomal subunit protein uS14m (102 aa).

It belongs to the universal ribosomal protein uS14 family.

The protein resides in the mitochondrion. The chain is Small ribosomal subunit protein uS14m (RPS14) from Paramecium tetraurelia.